The chain runs to 570 residues: Glutamate--tRNA ligase (570 aa).

The short motif at 105 to 115 is the 'HIGH' region element; that stretch reads PNPDGAFHLGN.

Belongs to the class-I aminoacyl-tRNA synthetase family. Glutamate--tRNA ligase type 2 subfamily.

Its subcellular location is the cytoplasm. The catalysed reaction is tRNA(Glu) + L-glutamate + ATP = L-glutamyl-tRNA(Glu) + AMP + diphosphate. Functionally, catalyzes the attachment of glutamate to tRNA(Glu) in a two-step reaction: glutamate is first activated by ATP to form Glu-AMP and then transferred to the acceptor end of tRNA(Glu). The sequence is that of Glutamate--tRNA ligase from Pyrococcus horikoshii (strain ATCC 700860 / DSM 12428 / JCM 9974 / NBRC 100139 / OT-3).